The chain runs to 522 residues: Ribonuclease Y (522 aa).

Residues 7–23 (SGSSAAVISGLVGFYIS) traverse the membrane as a helical segment. The region spanning 212–278 (LTNLVHLNDD…TKTLELLIQD (67 aa)) is the KH domain. The HD domain occupies 338–431 (ALSHTLEVAH…VCAADALSAA (94 aa)).

Belongs to the RNase Y family.

The protein localises to the cell membrane. Endoribonuclease that initiates mRNA decay. This Sulfurimonas denitrificans (strain ATCC 33889 / DSM 1251) (Thiomicrospira denitrificans (strain ATCC 33889 / DSM 1251)) protein is Ribonuclease Y.